A 417-amino-acid polypeptide reads, in one-letter code: MSLSNKLAITDVDLKDKRVLIRVDFNVPLDADKKITNNQRIVGALPTIKYAIENGAKAVVLMSHLGRPDGKANPKYSLKPVATELEKLLSKSVIFAENCVGKETEEIVNKATGGQVILLENLRFHAEEEGSSKDAEGKKVKADKEKVEEFRKGLTALGDVYINDAFGTAHRAHSSMVGVDLPQKASGFLVKKELEYFAKALESPQRPFLAILGGAKVSDKIQLIDNLLPKVNSLIITGAMAFTFKKTLENVKIGNSLFDEAGSKIVGDIVEKAKKNNVKIVLPVDYVTADKFAADAKTGYATDADGIPDGYMGLDVGEKSVELYKKTIAEAKTILWNGPPGVFELEPFANATKKTLDAAVAAAQSGSIVIIGGGDTATVAAKYGAEAKLSHVSTGGGASLELLEGKVLPGVDALSSK.

Residues valine 23, aspartate 24, phenylalanine 25, asparagine 26, glutamine 39, arginine 40, serine 63, histidine 64, glycine 66, arginine 67, leucine 122, arginine 123, histidine 170, and arginine 171 each contribute to the (2R)-3-phosphoglycerate site. Serine 203 carries the phosphoserine modification. Residue glycine 214 coordinates ADP. Glycine 214 is a binding site for CDP. The AMP site is built by alanine 215 and lysine 216. Alanine 215 contacts ATP. Position 215 (alanine 215) interacts with Mg(2+). Aspartate 219 is a CDP binding site. Aspartate 219 is a binding site for Mg(2+). Residue lysine 220 coordinates AMP. Position 220 (lysine 220) interacts with ATP. Glycine 238 serves as a coordination point for ADP. Glycine 238 is a binding site for CDP. Residues alanine 239 and glycine 313 each contribute to the AMP site. The ATP site is built by alanine 239 and glycine 313. CDP-binding residues include glycine 338 and phenylalanine 343. Phenylalanine 343 contacts ADP. Position 344 (glutamate 344) interacts with AMP. Residues glutamate 344, aspartate 375, and threonine 376 each coordinate ATP. Aspartate 375 is a Mg(2+) binding site.

This sequence belongs to the phosphoglycerate kinase family. Monomer. It depends on Mg(2+) as a cofactor. Dephosphorylated by PTC1 and PTC2 at Ser-203; the protein is cytosolic when dephosphorylated.

It is found in the cytoplasm. Its subcellular location is the cytosol. The protein resides in the mitochondrion. It catalyses the reaction (2R)-3-phosphoglycerate + ATP = (2R)-3-phospho-glyceroyl phosphate + ADP. The protein operates within carbohydrate degradation; glycolysis; pyruvate from D-glyceraldehyde 3-phosphate: step 2/5. Catalyzes one of the two ATP producing reactions in the glycolytic pathway via the reversible conversion of 1,3-diphosphoglycerate to 3-phosphoglycerate. Both L- and D- forms of purine and pyrimidine nucleotides can be used as substrates, but the activity is much lower on pyrimidines. Negatively regulates the biosynthesis of acetyl-CoA from pyruvate in the mitochondrion and consequently also attenuates aflatoxin production. The sequence is that of Phosphoglycerate kinase from Aspergillus flavus (strain ATCC 200026 / FGSC A1120 / IAM 13836 / NRRL 3357 / JCM 12722 / SRRC 167).